The primary structure comprises 1468 residues: Neuropathy target esterase sws (1468 aa).

The Lumenal segment spans residues 1 to 34; it reads MDVLEMLRASASGSYNTIFSDAWCQYVSKQITAT. A helical transmembrane segment spans residues 35 to 55; that stretch reads VYMYCALVMMSLLFIAWFLYF. Topologically, residues 56 to 1468 are cytoplasmic; the sequence is KRMARLRLRD…RSSPNNETKN (1413 aa). 174–301 is a binding site for a nucleoside 3',5'-cyclic phosphate; the sequence is IFGHFEKPVF…IRVIQVIMIR (128 aa). 2 stretches are compositionally biased toward polar residues: residues 332–348 and 357–366; these read TMSG…SRQA and NQLNLMQSAA. Residues 332-411 form a disordered region; that stretch reads TMSGPINSQT…DGSFHGTTNL (80 aa). 2 positions are modified to phosphoserine: Ser-442 and Ser-451. A nucleoside 3',5'-cyclic phosphate-binding positions include 480–607 and 596–723; these read ELGL…VVRR and IVLD…LSHR. The 167-residue stretch at 950-1116 folds into the PNPLA domain; it reads LVLGGGGARG…VNNLPGHLWR (167 aa). Residues 954-959 carry the GXGXXG motif; the sequence is GGGARG. Residues 981-985 carry the GXSXG motif; that stretch reads GVSIG. Ser-983 acts as the Nucleophile in catalysis. The active-site Proton acceptor is the Asp-1103. The DGA/G motif lies at 1103 to 1105; sequence DGG. A Phosphoserine modification is found at Ser-1197. Residues 1368 to 1468 are disordered; that stretch reads ERKMDKSTQS…RSSPNNETKN (101 aa). Residues 1374–1383 show a composition bias toward low complexity; sequence STQSSPPTSS. The span at 1385–1395 shows a compositional bias: basic and acidic residues; that stretch reads TDMRGKEEAKH. The segment covering 1419–1441 has biased composition (low complexity); sequence TQTGQEQELQQQQKLQQLQQDQG. A compositionally biased stretch (basic and acidic residues) spans 1446-1459; that stretch reads QLVDKDKEEDKENR.

The protein belongs to the NTE family. As to quaternary structure, interacts with Pka-C3; interaction inhibits the catalytic function of Pka-C3 and the esterase activity of sws.

It localises to the endoplasmic reticulum membrane. It catalyses the reaction a 1-acyl-sn-glycero-3-phosphocholine + H2O = sn-glycerol 3-phosphocholine + a fatty acid + H(+). In terms of biological role, phospholipase B that deacylates intracellular phosphatidylcholine (PtdCho), generating glycerophosphocholine (GroPtdCho). This deacylation occurs at both sn-2 and sn-1 positions of PtdCho. Its specific chemical modification by certain organophosphorus (OP) compounds leads to distal axonopathy. Plays a role in the signaling mechanism between neurons and glia that regulates glia wrapping during development of the adult brain. Essential for membrane lipid homeostasis and cell survival in both neurons and glia of the adult brain. The sequence is that of Neuropathy target esterase sws from Drosophila sechellia (Fruit fly).